Consider the following 395-residue polypeptide: MWGLCKNHFPSNKIQVQERNKALKPKKSGSEHKTKQLFPVFNCKKKEKGVMIRFAILRNANTSLLSARSICLFTQAPTYCHVRLNTLNKSITTKRNSLTESKRHVHDGKHFFTTPHQQQQTKLGEIEEGHSPNIKGEDLRSIGQAITHQRNKRRKQIWSAIFGGIFGVILGYSLIYRVIYLKEQSFLPLFPSSKIRKLSTRDLKKVDVNQVQKLSKLRVLEILSGHDMIKEQYGVPLLDKDGNSPTLNEFSMWCEDQDPCVTGIVMEPDDKRDSSHTWYRIPFVCKWRITHRPISIRGTIDDLLNRIGLETADLFEIISPERVYGSFKYEYPLQGDSHALHLWFHGEIELDDDSLIVYNGKYHVDVKLQEIDLFRREKNGQLVQYVLYKNEAGDK.

A helical transmembrane segment spans residues 156–176; sequence QIWSAIFGGIFGVILGYSLIY.

This sequence belongs to the AIM39 family.

Its subcellular location is the mitochondrion membrane. The chain is Altered inheritance of mitochondria protein 39, mitochondrial (AIM39) from Saccharomyces cerevisiae (strain Lalvin EC1118 / Prise de mousse) (Baker's yeast).